The primary structure comprises 417 residues: Serine hydroxymethyltransferase (417 aa).

Residues Leu-121 and 125–127 (GHL) each bind (6S)-5,6,7,8-tetrahydrofolate. Lys-230 is modified (N6-(pyridoxal phosphate)lysine). 355 to 357 (SPF) provides a ligand contact to (6S)-5,6,7,8-tetrahydrofolate.

It belongs to the SHMT family. Homodimer. Requires pyridoxal 5'-phosphate as cofactor.

Its subcellular location is the cytoplasm. The catalysed reaction is (6R)-5,10-methylene-5,6,7,8-tetrahydrofolate + glycine + H2O = (6S)-5,6,7,8-tetrahydrofolate + L-serine. It functions in the pathway one-carbon metabolism; tetrahydrofolate interconversion. It participates in amino-acid biosynthesis; glycine biosynthesis; glycine from L-serine: step 1/1. Functionally, catalyzes the reversible interconversion of serine and glycine with tetrahydrofolate (THF) serving as the one-carbon carrier. This reaction serves as the major source of one-carbon groups required for the biosynthesis of purines, thymidylate, methionine, and other important biomolecules. Also exhibits THF-independent aldolase activity toward beta-hydroxyamino acids, producing glycine and aldehydes, via a retro-aldol mechanism. The sequence is that of Serine hydroxymethyltransferase from Legionella pneumophila (strain Lens).